A 261-amino-acid chain; its full sequence is Transmembrane protein 106A (261 aa).

The helical transmembrane segment at 95–115 threads the bilayer; the sequence is VFLAVSICLVTSSLIIFFLFP.

The protein belongs to the TMEM106 family.

It is found in the cell membrane. Its function is as follows. Activates macrophages and polarizes them into M1-like macrophages through the activation of the MAPK and NF-kappaB signaling pathway. Upon activation, up-regulates the expression of CD80, CD86, CD69 and MHC II on macrophages, and induces the release of pro-inflammatory cytokines such as TNF, IL1B, IL6, CCL2 and nitric oxide. May play a role in inhibition of proliferation and migration. This is Transmembrane protein 106A (TMEM106A) from Bos taurus (Bovine).